We begin with the raw amino-acid sequence, 70 residues long: ATP synthase subunit c (70 aa).

Helical transmembrane passes span 4 to 24 (IAAA…NGLI) and 47 to 67 (FIGI…SFIV).

This sequence belongs to the ATPase C chain family. F-type ATPases have 2 components, F(1) - the catalytic core - and F(0) - the membrane proton channel. F(1) has five subunits: alpha(3), beta(3), gamma(1), delta(1), epsilon(1). F(0) has three main subunits: a(1), b(2) and c(10-14). The alpha and beta chains form an alternating ring which encloses part of the gamma chain. F(1) is attached to F(0) by a central stalk formed by the gamma and epsilon chains, while a peripheral stalk is formed by the delta and b chains.

It is found in the cell membrane. Functionally, f(1)F(0) ATP synthase produces ATP from ADP in the presence of a proton or sodium gradient. F-type ATPases consist of two structural domains, F(1) containing the extramembraneous catalytic core and F(0) containing the membrane proton channel, linked together by a central stalk and a peripheral stalk. During catalysis, ATP synthesis in the catalytic domain of F(1) is coupled via a rotary mechanism of the central stalk subunits to proton translocation. In terms of biological role, key component of the F(0) channel; it plays a direct role in translocation across the membrane. A homomeric c-ring of between 10-14 subunits forms the central stalk rotor element with the F(1) delta and epsilon subunits. The polypeptide is ATP synthase subunit c (Staphylococcus carnosus (strain TM300)).